We begin with the raw amino-acid sequence, 293 residues long: MTEDSQRNFRSVYYEKVGFRGVEEKKSLEILLKDDRLDTEKLCTFSQRFPLPSMYRALVWKVLLGILPPHHESHAKVMMYRKEQYLDVLHALKVVRFVSDATPQAEVYLRMYQLESGKLPRSPSFPLEPDDEVFLAIAKAMEEMVEDSVDCYWITRRFVNQLNTKYRDSLPQLPKAFEQYLNLEDGRLLTHLRMCSAAPKLPYDLWFKRCFAGCLPESSLQRVWDKVVSGSCKILVFVAVEILLTFKIKVMALNSAEKITKFLENIPQDSSDAIVSKAIDLWHKHCGTPVHSS.

Residues 50–231 (PLPSMYRALV…RVWDKVVSGS (182 aa)) form the Rab-GAP TBC domain.

Component of the TSC-TBC complex (also named Rhebulator complex), composed of 2 molecules of TSC1, 2 molecules of TSC2 and 1 molecule of TBC1D7. Interacts with TSC1 (via C-terminal half of the coiled-coil domain). Highly expressed in heart, and slightly in kidney, liver and placenta.

It is found in the lysosome membrane. It localises to the cytoplasmic vesicle. The protein localises to the cytoplasm. Its subcellular location is the cytosol. Non-catalytic component of the TSC-TBC complex, a multiprotein complex that acts as a negative regulator of the canonical mTORC1 complex, an evolutionarily conserved central nutrient sensor that stimulates anabolic reactions and macromolecule biosynthesis to promote cellular biomass generation and growth. The TSC-TBC complex acts as a GTPase-activating protein (GAP) for the small GTPase RHEB, a direct activator of the protein kinase activity of mTORC1. In absence of nutrients, the TSC-TBC complex inhibits mTORC1, thereby preventing phosphorylation of ribosomal protein S6 kinase (RPS6KB1 and RPS6KB2) and EIF4EBP1 (4E-BP1) by the mTORC1 signaling. The TSC-TBC complex is inactivated in response to nutrients, relieving inhibition of mTORC1. The polypeptide is TBC1 domain family member 7 (Homo sapiens (Human)).